A 349-amino-acid chain; its full sequence is Probable sugar phosphate/phosphate translocator At5g25400 (349 aa).

Transmembrane regions (helical) follow at residues 15 to 35 (IIIS…VIVY), 49 to 69 (FPIS…FLLI), 89 to 109 (VVPI…AYIY), 113 to 133 (SFIQ…GVLF), 141 to 161 (ETMM…YGEA), 165 to 185 (VWGV…LVMI), 205 to 225 (VAPC…FPIL), 236 to 256 (LIFG…FLLV), 263 to 283 (TMNV…WSVI), and 286 to 306 (TVTP…AYYN). The EamA domain occupies 38–156 (YILDKKMYDW…LSISFGVAIA (119 aa)). A disordered region spans residues 321–349 (TAQQVDEETGRLLEEREGNEGGRKNEPED). Residues 328-349 (ETGRLLEEREGNEGGRKNEPED) are compositionally biased toward basic and acidic residues.

This sequence belongs to the TPT transporter family. TPT (TC 2.A.7.9) subfamily.

The protein resides in the membrane. In Arabidopsis thaliana (Mouse-ear cress), this protein is Probable sugar phosphate/phosphate translocator At5g25400.